We begin with the raw amino-acid sequence, 160 residues long: Transcription elongation factor GreA (160 aa).

A coiled-coil region spans residues 14-76 (VKKLEEELEY…QLENMLKNAS (63 aa)).

The protein belongs to the GreA/GreB family.

Its function is as follows. Necessary for efficient RNA polymerase transcription elongation past template-encoded arresting sites. The arresting sites in DNA have the property of trapping a certain fraction of elongating RNA polymerases that pass through, resulting in locked ternary complexes. Cleavage of the nascent transcript by cleavage factors such as GreA or GreB allows the resumption of elongation from the new 3'terminus. GreA releases sequences of 2 to 3 nucleotides. This chain is Transcription elongation factor GreA, found in Clostridium botulinum (strain Okra / Type B1).